Reading from the N-terminus, the 127-residue chain is Glycine cleavage system H protein (127 aa).

One can recognise a Lipoyl-binding domain in the interval 22–104 (TVRIGITDFA…YDKAWMIVIE (83 aa)). Residue lysine 63 is modified to N6-lipoyllysine.

It belongs to the GcvH family. In terms of assembly, the glycine cleavage system is composed of four proteins: P, T, L and H. The cofactor is (R)-lipoate.

In terms of biological role, the glycine cleavage system catalyzes the degradation of glycine. The H protein shuttles the methylamine group of glycine from the P protein to the T protein. Functionally, is also involved in protein lipoylation via its role as an octanoyl/lipoyl carrier protein intermediate. This chain is Glycine cleavage system H protein, found in Anoxybacillus flavithermus (strain DSM 21510 / WK1).